Here is a 292-residue protein sequence, read N- to C-terminus: Alpha-soluble NSF attachment protein (292 aa).

Belongs to the SNAP family.

Its subcellular location is the cytoplasmic vesicle. The protein localises to the membrane. Required for vesicular transport between the endoplasmic reticulum and the Golgi apparatus. Also between the endosome and phagosome. This chain is Alpha-soluble NSF attachment protein, found in Drosophila melanogaster (Fruit fly).